We begin with the raw amino-acid sequence, 208 residues long: Protein late bloomer (208 aa).

A run of 4 helical transmembrane segments spans residues 10–30 (IASI…IGWI), 41–61 (FVIA…LGIF), 67–87 (SVVL…LQIV), and 174–194 (FIIV…LAVF).

It belongs to the tetraspanin (TM4SF) family. Transiently expressed on motor axons, growth cones and terminal arbors.

Its subcellular location is the membrane. The protein resides in the synapse. Facilitates synapse formation. This Drosophila melanogaster (Fruit fly) protein is Protein late bloomer (lbm).